A 217-amino-acid polypeptide reads, in one-letter code: Uridylate kinase (217 aa).

An ATP-binding site is contributed by 6–10 (KLSGR). G38 contacts UMP. The ATP site is built by G39 and R43. Residues D60 and 107-113 (FQPGQST) each bind UMP. ATP is bound by residues N134, Y139, and D142.

The protein belongs to the UMP kinase family. Homohexamer.

It localises to the cytoplasm. It carries out the reaction UMP + ATP = UDP + ADP. The protein operates within pyrimidine metabolism; CTP biosynthesis via de novo pathway; UDP from UMP (UMPK route): step 1/1. With respect to regulation, inhibited by UTP. Its function is as follows. Catalyzes the reversible phosphorylation of UMP to UDP. This Pyrobaculum islandicum (strain DSM 4184 / JCM 9189 / GEO3) protein is Uridylate kinase.